A 184-amino-acid polypeptide reads, in one-letter code: Oligoribonuclease (184 aa).

One can recognise an Exonuclease domain in the interval 7 to 170 (LIWIDLEMTG…DDIRESVAEL (164 aa)). The active site involves Tyr128.

The protein belongs to the oligoribonuclease family.

The protein localises to the cytoplasm. Its function is as follows. 3'-to-5' exoribonuclease specific for small oligoribonucleotides. In Baumannia cicadellinicola subsp. Homalodisca coagulata, this protein is Oligoribonuclease.